The primary structure comprises 264 residues: Type III pantothenate kinase (264 aa).

Residue 6 to 13 participates in ATP binding; the sequence is DVGNTNIK. Residue 108–111 coordinates substrate; that stretch reads GSDR. Asp110 (proton acceptor) is an active-site residue. Thr134 is a binding site for ATP.

This sequence belongs to the type III pantothenate kinase family. In terms of assembly, homodimer. Requires NH4(+) as cofactor. K(+) is required as a cofactor.

It is found in the cytoplasm. It catalyses the reaction (R)-pantothenate + ATP = (R)-4'-phosphopantothenate + ADP + H(+). Its pathway is cofactor biosynthesis; coenzyme A biosynthesis; CoA from (R)-pantothenate: step 1/5. Its function is as follows. Catalyzes the phosphorylation of pantothenate (Pan), the first step in CoA biosynthesis. The protein is Type III pantothenate kinase of Ehrlichia canis (strain Jake).